Consider the following 1294-residue polypeptide: Disease resistance protein L6 (1294 aa).

The first 29 residues, 1 to 29, serve as a signal peptide directing secretion; the sequence is MSYLREVATAVALLLPFILLNKFWRPNSK. The disordered stretch occupies residues 34–54; it reads NDDDDSTSEVDAISDSTNPSG. The TIR domain occupies 59–221; the sequence is VEYEVFLSFR…AIADKVSADI (163 aa). Residues 68–73 and Gly-101 each bind NAD(+); that span reads RGPDTR. Glu-135 is a catalytic residue. One can recognise an NB-ARC domain in the interval 241-480; it reads DDHITAVLEK…VYDRLKISYD (240 aa). 11 LRR repeats span residues 246–268, 468–492, 604–625, 626–650, 904–928, 1012–1039, 1063–1085, 1086–1109, 1179–1203, 1205–1229, and 1254–1278; these read AVLEKLSLDSENVTMVGLYGMGG, LDEVYDRLKISYDALNPEAKEIFLD, LSELRYLHAREAMLTGDFNNLL, PNLKWLELPFYKHGEDDPPLTNYTM, LENLTSLEVNDIFQTLGGDLDGLQG, FPMLKKLDLAVANITKEEDLDAIGSLEE, LQKLTTLVVKVPSLREIEGLEEL, KSLQDLYLEGCTSLGRLPLEKLKE, LEELDSLELTLDDTCSSIERISFLS, LQKLTTLIVEVPSLREIEGLAELKS, and LKNLNVLDIQGCKSLSVDHLSALKT.

Belongs to the disease resistance TIR-NB-LRR family. In terms of assembly, homooligomer; homooligomerization is required for activity.

The catalysed reaction is NAD(+) + H2O = ADP-D-ribose + nicotinamide + H(+). The enzyme catalyses NADP(+) + H2O = ADP-D-ribose 2'-phosphate + nicotinamide + H(+). It carries out the reaction NAD(+) = 2'cADPR + nicotinamide + H(+). Its function is as follows. TIR-NB-LRR receptor-like protein that confers resistance to the flax rust phytopathogenic fungus (M.lini). An NAD(+) hydrolase (NADase): in response to activation, catalyzes cleavage of NAD(+) into ADP-D-ribose (ADPR) and nicotinamide; NAD(+) cleavage triggering a defense system that promotes cell death. Also able to hydrolyze NADP(+), but not other NAD(+)-related molecules. Makes small amounts of 2' cyclic ADPR (2'cADPR). The polypeptide is Disease resistance protein L6 (Linum usitatissimum (Flax)).